A 339-amino-acid chain; its full sequence is Serpentine receptor class gamma-7 (339 aa).

Helical transmembrane passes span 30–50 (YWIQ…IIIT), 65–85 (WILT…LFVV), 98–118 (FSTI…IYNY), 152–172 (IPLF…NTVI), 200–220 (LHLT…LLLM), 239–259 (SIFI…YAFF), and 268–288 (FLVD…PLIF). Positions 319–339 (PFNNTMPRQESPSPNYDSILA) are disordered.

It belongs to the nematode receptor-like protein srg family.

The protein localises to the membrane. The polypeptide is Serpentine receptor class gamma-7 (srg-7) (Caenorhabditis elegans).